An 83-amino-acid chain; its full sequence is Cytochrome b559 subunit alpha (83 aa).

A helical membrane pass occupies residues 21 to 35 (VIHSITIPSLFIAGW). Residue histidine 23 participates in heme binding.

It belongs to the PsbE/PsbF family. Heterodimer of an alpha subunit and a beta subunit. PSII is composed of 1 copy each of membrane proteins PsbA, PsbB, PsbC, PsbD, PsbE, PsbF, PsbH, PsbI, PsbJ, PsbK, PsbL, PsbM, PsbT, PsbX, PsbY, PsbZ, Psb30/Ycf12, at least 3 peripheral proteins of the oxygen-evolving complex and a large number of cofactors. It forms dimeric complexes. The cofactor is heme b.

It localises to the plastid. The protein resides in the chloroplast thylakoid membrane. In terms of biological role, this b-type cytochrome is tightly associated with the reaction center of photosystem II (PSII). PSII is a light-driven water:plastoquinone oxidoreductase that uses light energy to abstract electrons from H(2)O, generating O(2) and a proton gradient subsequently used for ATP formation. It consists of a core antenna complex that captures photons, and an electron transfer chain that converts photonic excitation into a charge separation. The polypeptide is Cytochrome b559 subunit alpha (Marchantia polymorpha (Common liverwort)).